Consider the following 75-residue polypeptide: Conotoxin Vc6a (75 aa).

Residues Met1 to Ala22 form the signal peptide. A propeptide spanning residues Asp23–Glu49 is cleaved from the precursor. Cystine bridges form between Cys51–Cys66, Cys58–Cys69, and Cys65–Cys74.

In terms of tissue distribution, expressed by the venom duct.

It is found in the secreted. The polypeptide is Conotoxin Vc6a (Conus victoriae (Queen Victoria cone)).